Reading from the N-terminus, the 193-residue chain is MPEPAKFAPAPKKGSKKAVTKAQKKDGKKRKRSRKESYSIYVYKVLKRVHPDTGIWCKAMGIMNSFLNDIFERIAGEASRLAHYNKRSTITSRRSRRPCACCCPASWPSTPCPRAPRRSPSTPAPSESLPGPGARSLPPSLPPRVAGCFVSKGSFQGHLTTSVKESFLCCQSQLMFLASRLVNFRRAHNTKHR.

Low complexity predominate over residues 1-12 (MPEPAKFAPAPK). Residues 1–33 (MPEPAKFAPAPKKGSKKAVTKAQKKDGKKRKRS) form a disordered region. P2 carries the post-translational modification N-acetylproline. The residue at position 6 (K6) is an N6-(2-hydroxyisobutyryl)lysine; alternate. An N6-(beta-hydroxybutyryl)lysine; alternate mark is found at K6 and K12. N6-acetyllysine; alternate is present on residues K6, K12, and K13. N6-butyryllysine; alternate is present on K6. 3 positions are modified to N6-crotonyllysine; alternate: K6, K12, and K13. N6-lactoyllysine; alternate is present on residues K6 and K12. Residue K6 forms a Glycyl lysine isopeptide (Lys-Gly) (interchain with G-Cter in SUMO2); alternate linkage. K13 bears the N6-(2-hydroxyisobutyryl)lysine; alternate mark. A Phosphoserine; by STK4/MST1 modification is found at S15. K16, K17, K21, and K24 each carry N6-acetyllysine; alternate. K16, K17, K21, and K24 each carry N6-crotonyllysine; alternate. Residues K16, K17, K21, and K24 each carry the N6-lactoyllysine; alternate modification. N6-(beta-hydroxybutyryl)lysine; alternate occurs at positions 17 and 21. K17 is modified (N6-glutaryllysine; alternate). N6-(2-hydroxyisobutyryl)lysine; alternate is present on residues K21 and K24. The residue at position 21 (K21) is an N6-butyryllysine; alternate. A Glycyl lysine isopeptide (Lys-Gly) (interchain with G-Cter in SUMO2); alternate cross-link involves residue K21. N6-(2-hydroxyisobutyryl)lysine is present on K25. K35 bears the N6-(2-hydroxyisobutyryl)lysine; alternate mark. Residue K35 is modified to N6-(beta-hydroxybutyryl)lysine; alternate. K35 is modified (N6-crotonyllysine; alternate). Residue K35 is modified to N6-glutaryllysine; alternate. K35 carries the N6-succinyllysine; alternate modification. K35 participates in a covalent cross-link: Glycyl lysine isopeptide (Lys-Gly) (interchain with G-Cter in ubiquitin); alternate. S37 is subject to Phosphoserine; by AMPK. K44, K47, and K58 each carry N6-(2-hydroxyisobutyryl)lysine; alternate. K44 bears the N6-lactoyllysine; alternate mark. K44 and K47 each carry N6-glutaryllysine; alternate. The residue at position 47 (K47) is an N6-methyllysine; alternate. Residue K58 is modified to N6,N6-dimethyllysine; alternate. R80 bears the Dimethylated arginine mark. K86 bears the N6-(2-hydroxyisobutyryl)lysine; alternate mark. Position 86 is an N6-(beta-hydroxybutyryl)lysine; alternate (K86). K86 carries the post-translational modification N6-acetyllysine; alternate. N6-lactoyllysine; alternate is present on K86. Position 86 is an N6,N6,N6-trimethyllysine; alternate (K86). An omega-N-methylarginine mark is found at R87 and R93. Residues 111 to 136 (PCPRAPRRSPSTPAPSESLPGPGARS) are disordered.

It belongs to the histone H2B family. In terms of assembly, the nucleosome is a histone octamer containing two molecules each of H2A, H2B, H3 and H4 assembled in one H3-H4 heterotetramer and two H2A-H2B heterodimers. The octamer wraps approximately 147 bp of DNA. Phosphorylation at Ser-37 (H2BS36ph) by AMPK in response to stress promotes transcription. Phosphorylated on Ser-15 (H2BS14ph) by STK4/MST1 during apoptosis; which facilitates apoptotic chromatin condensation. Also phosphorylated on Ser-15 in response to DNA double strand breaks (DSBs), and in correlation with somatic hypermutation and immunoglobulin class-switch recombination. In terms of processing, crotonylation (Kcr) is specifically present in male germ cells and marks testis-specific genes in post-meiotic cells, including X-linked genes that escape sex chromosome inactivation in haploid cells. Crotonylation marks active promoters and enhancers and confers resistance to transcriptional repressors. It is also associated with post-meiotically activated genes on autosomes. Post-translationally, lactylated in macrophages by EP300/P300 by using lactoyl-CoA directly derived from endogenous or exogenous lactate, leading to stimulates gene transcription.

The protein localises to the nucleus. The protein resides in the chromosome. In terms of biological role, core component of nucleosome. Nucleosomes wrap and compact DNA into chromatin, limiting DNA accessibility to the cellular machineries which require DNA as a template. Histones thereby play a central role in transcription regulation, DNA repair, DNA replication and chromosomal stability. DNA accessibility is regulated via a complex set of post-translational modifications of histones, also called histone code, and nucleosome remodeling. This is Putative histone H2B type 2-C from Homo sapiens (Human).